We begin with the raw amino-acid sequence, 204 residues long: Imidazoleglycerol-phosphate dehydratase (204 aa).

Belongs to the imidazoleglycerol-phosphate dehydratase family.

It is found in the cytoplasm. It catalyses the reaction D-erythro-1-(imidazol-4-yl)glycerol 3-phosphate = 3-(imidazol-4-yl)-2-oxopropyl phosphate + H2O. Its pathway is amino-acid biosynthesis; L-histidine biosynthesis; L-histidine from 5-phospho-alpha-D-ribose 1-diphosphate: step 6/9. This chain is Imidazoleglycerol-phosphate dehydratase, found in Rhodococcus opacus (strain B4).